The primary structure comprises 465 residues: Trigger factor (465 aa).

Residues 164–245 (GDFVSIDLSA…VQSVKERELP (82 aa)) enclose the PPIase FKBP-type domain. The tract at residues 430 to 465 (GNTVDTAEMFGEPAAEPEQADAAQAGDAEKAAADSE) is disordered. Low complexity predominate over residues 440 to 455 (GEPAAEPEQADAAQAG). The segment covering 456 to 465 (DAEKAAADSE) has biased composition (basic and acidic residues).

This sequence belongs to the FKBP-type PPIase family. Tig subfamily.

It is found in the cytoplasm. The enzyme catalyses [protein]-peptidylproline (omega=180) = [protein]-peptidylproline (omega=0). Involved in protein export. Acts as a chaperone by maintaining the newly synthesized protein in an open conformation. Functions as a peptidyl-prolyl cis-trans isomerase. The polypeptide is Trigger factor (Nocardia farcinica (strain IFM 10152)).